A 351-amino-acid chain; its full sequence is GDSL esterase/lipase At3g53100 (351 aa).

Residues 1–24 (MQKMRVSGFRVLLLVSCFFCKSKG) form the signal peptide. Ser36 serves as the catalytic Nucleophile. Residues Asn234, Asn254, and Asn318 are each glycosylated (N-linked (GlcNAc...) asparagine). Active-site residues include Asp326 and His329.

This sequence belongs to the 'GDSL' lipolytic enzyme family.

It is found in the secreted. The chain is GDSL esterase/lipase At3g53100 from Arabidopsis thaliana (Mouse-ear cress).